Reading from the N-terminus, the 166-residue chain is Protein-export protein SecB (166 aa).

The protein belongs to the SecB family. As to quaternary structure, homotetramer, a dimer of dimers. One homotetramer interacts with 1 SecA dimer.

The protein resides in the cytoplasm. One of the proteins required for the normal export of preproteins out of the cell cytoplasm. It is a molecular chaperone that binds to a subset of precursor proteins, maintaining them in a translocation-competent state. It also specifically binds to its receptor SecA. In Sinorhizobium fredii (strain NBRC 101917 / NGR234), this protein is Protein-export protein SecB.